Reading from the N-terminus, the 278-residue chain is Deoxyribonuclease-1-like 2 (278 aa).

The first 21 residues, 1–21 (MGWPWAPLTAVWALGVMGATA), serve as a signal peptide directing secretion. Active-site residues include E99 and H150. A disulfide bridge connects residues C189 and C225.

Belongs to the DNase I family. Mg(2+) serves as cofactor. Ca(2+) is required as a cofactor.

The protein localises to the cytoplasm. Its subcellular location is the secreted. In terms of biological role, divalent cation-dependent acid DNA endonuclease involved in the breakdown of the nucleus during corneocyte formation of epidermal keratinocytes. May play an immune role by eliminating harmful DNA released into the extracellular environment by damaged epidermal cells. This Mus musculus (Mouse) protein is Deoxyribonuclease-1-like 2 (Dnase1l2).